Consider the following 226-residue polypeptide: Deoxyribose-phosphate aldolase (226 aa).

D84 functions as the Proton donor/acceptor in the catalytic mechanism. K146 functions as the Schiff-base intermediate with acetaldehyde in the catalytic mechanism. The active-site Proton donor/acceptor is the K188.

It belongs to the DeoC/FbaB aldolase family. DeoC type 1 subfamily. In terms of assembly, homodimer.

The protein resides in the cytoplasm. It carries out the reaction 2-deoxy-D-ribose 5-phosphate = D-glyceraldehyde 3-phosphate + acetaldehyde. It functions in the pathway carbohydrate degradation; 2-deoxy-D-ribose 1-phosphate degradation; D-glyceraldehyde 3-phosphate and acetaldehyde from 2-deoxy-alpha-D-ribose 1-phosphate: step 2/2. Functionally, catalyzes a reversible aldol reaction between acetaldehyde and D-glyceraldehyde 3-phosphate to generate 2-deoxy-D-ribose 5-phosphate. The sequence is that of Deoxyribose-phosphate aldolase from Pyrobaculum aerophilum (strain ATCC 51768 / DSM 7523 / JCM 9630 / CIP 104966 / NBRC 100827 / IM2).